We begin with the raw amino-acid sequence, 532 residues long: Phosphoenolpyruvate carboxykinase (ATP) (532 aa).

Positions 58, 194, and 200 each coordinate substrate. Residues K200, H220, and 236-244 (GLSGTGKTT) contribute to the ATP site. Mn(2+) is bound by residues K200 and H220. D257 contacts Mn(2+). ATP contacts are provided by residues E285, R322, 442 to 443 (RV), and T448. R322 contributes to the substrate binding site.

It belongs to the phosphoenolpyruvate carboxykinase (ATP) family. The cofactor is Mn(2+).

It localises to the cytoplasm. The enzyme catalyses oxaloacetate + ATP = phosphoenolpyruvate + ADP + CO2. It functions in the pathway carbohydrate biosynthesis; gluconeogenesis. Its function is as follows. Involved in the gluconeogenesis. Catalyzes the conversion of oxaloacetate (OAA) to phosphoenolpyruvate (PEP) through direct phosphoryl transfer between the nucleoside triphosphate and OAA. The polypeptide is Phosphoenolpyruvate carboxykinase (ATP) (Rubrobacter xylanophilus (strain DSM 9941 / JCM 11954 / NBRC 16129 / PRD-1)).